The chain runs to 704 residues: Non-sulfated chondroitin lyase E66 (704 aa).

Positions M1–S23 are cleaved as a signal peptide. Active-site proton acceptor residues include N236 and H291. Y299 acts as the Proton donor in catalysis.

This sequence belongs to the baculoviridae E66 family.

The protein resides in the virion membrane. The protein localises to the host nucleus. It is found in the host cytoplasm. In terms of biological role, component of the polyhedra envelope. Plays an essential role in oral infectivity. May digest, with its chondroitin lyase activity, the chondroitin sulfate barrier of the peritrophic matrix of the host midgut to facilitate viral infection in the epithelial cells. In Lepidoptera (butterflies and moths), this protein is Non-sulfated chondroitin lyase E66 (P79).